We begin with the raw amino-acid sequence, 360 residues long: Peptide chain release factor 1 (360 aa).

Gln237 is modified (N5-methylglutamine).

This sequence belongs to the prokaryotic/mitochondrial release factor family. Post-translationally, methylated by PrmC. Methylation increases the termination efficiency of RF1.

The protein resides in the cytoplasm. Peptide chain release factor 1 directs the termination of translation in response to the peptide chain termination codons UAG and UAA. The polypeptide is Peptide chain release factor 1 (Cellvibrio japonicus (strain Ueda107) (Pseudomonas fluorescens subsp. cellulosa)).